The primary structure comprises 447 residues: MARTYFGTDGIRGLVGRSPITPDFALRLAHAVGRVLRRKEARPMVLIGKDTRISGYMLESALESGFNSAGVDVMLLGPLPTPGVAYLTRAQRASLGVVISASHNPYYDNGIKFFSAQGTKLPDAWEEEVEQALTEDPVWADSAALGKARRLEDAAGRYIEFCKSTFDHALTLKGVKIVVDAAHGAAYQIAPKVFHELGADVVAIGCAPDGLNINEDVGATHPEALVLAVRANKADFGVALDGDADRLLLVDAAGRLYNGDELLYLLAADRLARGEAVPGAVGTLMTNMAVEVALKSQGVGFVRAKVGDRYVLEELHRQGWTLGGEGSGHLLALDKHTTGDGLVSALQVLQACVRSGKSLSQWLSSVQLFPQVLLNVRLQPGQDWKRNTQLEEATEAVKAELGDTGRVLIRASGTEPLLRVMVEARDGDQASRCAERLASVAKNSPAA.

Ser102 (phosphoserine intermediate) is an active-site residue. Residues Ser102, Asp241, Asp243, and Asp245 each contribute to the Mg(2+) site. At Ser102 the chain carries Phosphoserine.

Belongs to the phosphohexose mutase family. The cofactor is Mg(2+). In terms of processing, activated by phosphorylation.

It catalyses the reaction alpha-D-glucosamine 1-phosphate = D-glucosamine 6-phosphate. Its function is as follows. Catalyzes the conversion of glucosamine-6-phosphate to glucosamine-1-phosphate. The chain is Phosphoglucosamine mutase from Delftia acidovorans (strain DSM 14801 / SPH-1).